A 103-amino-acid chain; its full sequence is Large ribosomal subunit protein bL21 (103 aa).

It belongs to the bacterial ribosomal protein bL21 family. In terms of assembly, part of the 50S ribosomal subunit. Contacts protein L20.

This protein binds to 23S rRNA in the presence of protein L20. The chain is Large ribosomal subunit protein bL21 from Paracidovorax citrulli (strain AAC00-1) (Acidovorax citrulli).